Consider the following 718-residue polypeptide: Ophiobolin F synthase oblA (718 aa).

The (7Z)-ophiobola-7,19-dien-3-ol synthase stretch occupies residues 1-320 (MACKYSTLID…RYNGPTKFNE (320 aa)). Mg(2+)-binding residues include Asp-93 and Asp-97. Position 93 (Asp-93) interacts with substrate. Positions 93-97 (DDVID) match the DDXXD 1 motif. Residues 180–183 (RALD), Asn-224, 228–232 (SFEKE), and 311–312 (RY) each bind substrate. The NSE/DTE motif lies at 224 to 232 (NDLFSFEKE). The segment at 321–718 (LQLLRSEHGL…LRVMLELLKV (398 aa)) is geranylfarnesyl diphosphate synthase. The interval 346 to 391 (LVEGDCHESKPNELKRKRNGVSVDDEMRTNGTNGAKKPAHVSQPST) is disordered. A compositionally biased stretch (basic and acidic residues) spans 349–359 (GDCHESKPNEL). Residues Lys-429, Arg-432, and His-461 each contribute to the isopentenyl diphosphate site. Residues Asp-468 and Asp-472 each coordinate Mg(2+). Residues 468 to 472 (DDLED) carry the DDXXD 2 motif. Arg-477 contributes to the dimethylallyl diphosphate binding site. Arg-478 lines the isopentenyl diphosphate pocket. Lys-555, Thr-556, Gln-594, Asn-601, Lys-611, and Lys-621 together coordinate dimethylallyl diphosphate.

The protein in the N-terminal section; belongs to the terpene synthase family. This sequence in the C-terminal section; belongs to the FPP/GGPP synthase family. Requires Mg(2+) as cofactor.

The catalysed reaction is isopentenyl diphosphate + (2E,6E)-farnesyl diphosphate = (2E,6E,10E)-geranylgeranyl diphosphate + diphosphate. The enzyme catalyses isopentenyl diphosphate + (2E,6E,10E)-geranylgeranyl diphosphate = (2E,6E,10E,14E)-geranylfarnesyl diphosphate + diphosphate. It carries out the reaction (2E,6E,10E,14E)-geranylfarnesyl diphosphate + H2O = ophiobolin F + diphosphate. It participates in secondary metabolite biosynthesis; terpenoid biosynthesis. Functionally, bifunctional sesterterpene synthase; part of the gene cluster that mediates the biosynthesis of the sesterterpenes ophiobolins, fungal phytotoxins with potential anti-cancer activities. The first step of the pathway is performed by the sesterterpene synthase oblA that possesses both prenyl transferase and terpene cyclase activity, converting isopentenyl diphosphate and dimethylallyl diphosphate into geranylfarnesyl diphosphate (GFPP) and further converting GFPP into ophiobolin F, respectively. Other sesterterpenoids (C(25) terpenoids) are found as minor products of oblA. It is expected that ophiobolin F is then oxidized to ophiobolin A via ophiobolin C and ophiobolin B intermediates by the combined action of the cytochrome P450 monooxygenase oblB and the FAD-dependent oxidoreductase oblC. Although oblB catalyzes multistep oxygenations at C5 and C21/C7 in a relatively efficient manner, it is unable to convert ophiobolin F to ophiobolin C and produces instead several unexpected derivatives. The chain is Ophiobolin F synthase oblA from Aspergillus clavatus (strain ATCC 1007 / CBS 513.65 / DSM 816 / NCTC 3887 / NRRL 1 / QM 1276 / 107).